The chain runs to 104 residues: Interferon alpha-inducible protein 27-like protein 1 (104 aa).

3 helical membrane-spanning segments follow: residues 14–34, 59–79, and 81–101; these read VAAV…LSAM, GGGV…AAGL, and VTSK…LGSP.

Belongs to the IFI6/IFI27 family.

The protein resides in the membrane. Functionally, plays a role in the apoptotic process and has a pro-apoptotic activity. This Homo sapiens (Human) protein is Interferon alpha-inducible protein 27-like protein 1.